A 2055-amino-acid chain; its full sequence is MLKFKYGVRNPPEASASEPIASRASRLNLFFQGKPPLMTQQQMSALSREGMLDALFALFEECSQPALMKMKHVSSFVQKYSDTIAELRELQPSARDFEVRSLVGCGHFAEVQVVREKATGDVYAMKIMKKKALLAQEQVSFFEEERNILSRSTSPWIPQLQYAFQDKNNLYLVMEYQPGGDFLSLLNRYEDQLDESMIQFYLAELILAVHSVHQMGYVHRDIKPENILIDRTGEIKLVDFGSAAKMNSNKVDAKLPIGTPDYMAPEVLTVMNEDRRGTYGLDCDWWSVGVVAYEMVYGKTPFTEGTSARTFNNIMNFQRFLKFPDDPKVSSELLDLLQSLLCVQKERLKFEGLCCHPFFARTDWNNIRNSPPPFVPTLKSDDDTSNFDEPEKNSWVSSSVCQLSPSGFSGEELPFVGFSYSKALGYLGRSESVVSSLDSPAKVSSMEKKLLIKSKELQDSQDKCHKMEQEMTRLHRRVSEVEAVLSQKEVELKASETQRSLLEQDLATYITECSSLKRSLEQARMEVSQEDDKALQLLHDIREQSRKLQEIKEQEYQAQVEEMRLMMNQLEEDLVSARRRSDLYESELRESRLAAEEFKRKANECQHKLMKAKDQGKPEVGEYSKLEKINAEQQLKIQELQEKLEKAVKASTEATELLQNIRQAKERAERELEKLHNREDSSEGIKKKLVEAEERRHSLENKVKRLETMERRENRLKDDIQTKSEQIQQMADKILELEEKHREAQVSAQHLEVHLKQKEQHYEEKIKVLDNQIKKDLADKESLENMMQRHEEEAHEKGKILSEQKAMINAMDSKIRSLEQRIVELSEANKLAANSSLFTQRNMKAQEEMISELRQQKFYLETQAGKLEAQNRKLEEQLEKISHQDHSDKSRLLELETRLREVSLEHEEQKLELKRQLTELQLSLQERESQLTALQAARAALESQLRQAKTELEETTAEAEEEIQALTAHRDEIQRKFDALRNSCTVITDLEEQLNQLTEDNAELNNQNFYLSKQLDEASGANDEIVQLRSEVDHLRREITEREMQLTSQKQTMEALKTTCTMLEEQVLDLEALNDELLEKERQWEAWRSVLGDEKSQFECRVRELQRMLDTEKQSRARADQRITESRQVVELAVKEHKAEILALQQALKEQKLKAESLSDKLNDLEKKHAMLEMNARSLQQKLETERELKQRLLEEQAKLQQQMDLQKNHIFRLTQGLQEALDRADLLKTERSDLEYQLENIQVLYSHEKVKMEGTISQQTKLIDFLQAKMDQPAKKKKVPLQYNELKLALEKEKARCAELEEALQKTRIELRSAREEAAHRKATDHPHPSTPATARQQIAMSAIVRSPEHQPSAMSLLAPPSSRRKESSTPEEFSRRLKERMHHNIPHRFNVGLNMRATKCAVCLDTVHFGRQASKCLECQVMCHPKCSTCLPATCGLPAEYATHFTEAFCRDKMNSPGLQSKEPGSSLHLEGWMKVPRNNKRGQQGWDRKYIVLEGSKVLIYDNEAREAGQRPVEEFELCLPDGDVSIHGAVGASELANTAKADVPYILKMESHPHTTCWPGRTLYLLAPSFPDKQRWVTALESVVAGGRVSREKAEADAKLLGNSLLKLEGDDRLDMNCTLPFSDQVVLVGTEEGLYALNVLKNSLTHIPGIGAVFQIYIIKDLEKLLMIAGEERALCLVDVKKVKQSLAQSHLPAQPDVSPNIFEAVKGCHLFAAGKIENSLCICAAMPSKVVILRYNDNLSKYCIRKEIETSEPCSCIHFTNYSILIGTNKFYEIDMKQYTLDEFLDKNDHSLAPAVFASSSNSFPVSIVQANSAGQREEYLLCFHEFGVFVDSYGRRSRTDDLKWSRLPLAFAYREPYLFVTHFNSLEVIEIQARSSLGSPARAYLEIPNPRYLGPAISSGAIYLASSYQDKLRVICCKGNLVKESGTEQHRVPSTSRSSPNKRGPPTYNEHITKRVASSPAPPEGPSHPREPSTPHRYRDREGRTELRRDKSPGRPLEREKSPGRMLSTRRERSPGRLFEDSSRGRLPAGAVRTPLSQVNKVWDQSSV.

M1 carries the post-translational modification N-acetylmethionine. Residues 97 to 359 (FEVRSLVGCG…FEGLCCHPFF (263 aa)) form the Protein kinase domain. ATP-binding positions include 103-111 (VGCGHFAEV) and K126. D221 acts as the Proton acceptor in catalysis. Positions 360 to 430 (ARTDWNNIRN…SKALGYLGRS (71 aa)) constitute an AGC-kinase C-terminal domain. S432, S439, S479, and S581 each carry phosphoserine. Coiled-coil stretches lie at residues 441–1086 (AKVS…QWEA), 1091–1247 (LGDE…VLYS), and 1275–1325 (AKKK…RKAT). An interaction with Rho/Rac region spans residues 1132–1328 (LAVKEHKAEI…AAHRKATDHP (197 aa)). Y1237 carries the post-translational modification Phosphotyrosine. Positions 1316–1329 (REEAAHRKATDHPH) are enriched in basic and acidic residues. 2 disordered regions span residues 1316–1336 (REEA…PATA) and 1348–1377 (SPEH…EFSR). Positions 1353–1363 (PSAMSLLAPPS) are enriched in low complexity. Residues 1365 to 1377 (RRKESSTPEEFSR) show a composition bias toward basic and acidic residues. Residues 1388 to 1437 (PHRFNVGLNMRATKCAVCLDTVHFGRQASKCLECQVMCHPKCSTCLPATC) form a Phorbol-ester/DAG-type zinc finger. Residues 1469-1589 (SLHLEGWMKV…WVTALESVVA (121 aa)) enclose the PH domain. In terms of domain architecture, CNH spans 1617 to 1907 (RLDMNCTLPF…RYLGPAISSG (291 aa)). The residue at position 1747 (K1747) is an N6-acetyllysine. Residues 1932–2040 (SGTEQHRVPS…RGRLPAGAVR (109 aa)) form a disordered region. Over residues 1939-1948 (VPSTSRSSPN) the composition is skewed to polar residues. Residue S1966 is modified to Phosphoserine. Positions 1974-2031 (SHPREPSTPHRYRDREGRTELRRDKSPGRPLEREKSPGRMLSTRRERSPGRLFEDSSR) are enriched in basic and acidic residues. An SH3-binding motif is present at residues 1979–1984 (PSTPHR). S2021 carries the post-translational modification Phosphoserine. At T2041 the chain carries Phosphothreonine.

The protein belongs to the protein kinase superfamily. AGC Ser/Thr protein kinase family. In terms of assembly, interacts with TTC3. Homodimer. Directly interacts with KIF14 depending on the activation state (stronger interaction with the kinase-dead form). In terms of tissue distribution, a major signal was observed in testis and brain, but it was also detected in thymus, spleen, kidney, heart and lung.

The protein resides in the cytoplasm. It carries out the reaction L-seryl-[protein] + ATP = O-phospho-L-seryl-[protein] + ADP + H(+). It catalyses the reaction L-threonyl-[protein] + ATP = O-phospho-L-threonyl-[protein] + ADP + H(+). Plays a role in cytokinesis. Required for KIF14 localization to the central spindle and midbody. Probable RHO/RAC effector that binds to the GTP-bound forms of RHO and RAC1. It probably binds p21 with a tighter specificity in vivo. Displays serine/threonine protein kinase activity. Plays an important role in the regulation of cytokinesis and the development of the central nervous system. Phosphorylates MYL9/MLC2. This chain is Citron Rho-interacting kinase (Cit), found in Mus musculus (Mouse).